The sequence spans 99 residues: Putative membrane protein insertion efficiency factor (99 aa).

The protein belongs to the UPF0161 family.

It is found in the cell inner membrane. In terms of biological role, could be involved in insertion of integral membrane proteins into the membrane. This chain is Putative membrane protein insertion efficiency factor, found in Salinibacter ruber (strain DSM 13855 / M31).